The chain runs to 790 residues: Phenylalanine--tRNA ligase beta subunit (790 aa).

In terms of domain architecture, tRNA-binding spans 39–154 (PDSLNTVVTG…ADTPLGESAC (116 aa)). Residues 404–483 (FSPLSLSVRP…FVQKTQKILP (80 aa)) form the B5 domain. 4 residues coordinate Mg(2+): Asp457, Asp463, Glu466, and Glu467. An FDX-ACB domain is found at 694–790 (PIYPASSRDI…KLANIGQGNS (97 aa)).

The protein belongs to the phenylalanyl-tRNA synthetase beta subunit family. Type 1 subfamily. In terms of assembly, tetramer of two alpha and two beta subunits. Mg(2+) is required as a cofactor.

Its subcellular location is the cytoplasm. It catalyses the reaction tRNA(Phe) + L-phenylalanine + ATP = L-phenylalanyl-tRNA(Phe) + AMP + diphosphate + H(+). In Chlamydia trachomatis serovar A (strain ATCC VR-571B / DSM 19440 / HAR-13), this protein is Phenylalanine--tRNA ligase beta subunit.